The primary structure comprises 164 residues: 2S seed storage protein 1 (164 aa).

An N-terminal signal peptide occupies residues 1-21; it reads MANKLFLVCAALALCFLLTNA. 3 propeptides span residues 22–37, 74–83, and 163–164; these read SIYRTVVEFEEDDATN, EFDFEDDMEN, and FY.

Belongs to the 2S seed storage albumins family. As to quaternary structure, the mature protein consists of a small and a large chain linked by disulfide bonds.

Functionally, this is a 2S seed storage protein. The chain is 2S seed storage protein 1 (AT2S1) from Arabidopsis thaliana (Mouse-ear cress).